The sequence spans 39 residues: Photosystem II reaction center protein Psb30 (39 aa).

A helical transmembrane segment spans residues 12–32; that stretch reads IFQLTFVGLIMVAGPVVIFLL.

The protein belongs to the Psb30/Ycf12 family. PSII is composed of 1 copy each of membrane proteins PsbA, PsbB, PsbC, PsbD, PsbE, PsbF, PsbH, PsbI, PsbJ, PsbK, PsbL, PsbM, PsbT, PsbX, PsbY, PsbZ, Psb30/Ycf12, peripheral proteins PsbO, CyanoQ (PsbQ), PsbU, PsbV and a large number of cofactors. It forms dimeric complexes.

The protein localises to the cellular thylakoid membrane. A core subunit of photosystem II (PSII), probably helps stabilize the reaction center. This chain is Photosystem II reaction center protein Psb30, found in Rippkaea orientalis (strain PCC 8801 / RF-1) (Cyanothece sp. (strain PCC 8801)).